The following is a 501-amino-acid chain: Glycerol kinase (501 aa).

Residue T12 coordinates ADP. T12, T13, and S14 together coordinate ATP. Residue T12 participates in sn-glycerol 3-phosphate binding. ADP is bound at residue R16. Sn-glycerol 3-phosphate-binding residues include R82, E83, Y135, and D244. 5 residues coordinate glycerol: R82, E83, Y135, D244, and Q245. Positions 266, 309, 409, and 413 each coordinate ADP. T266, G309, and G409 together coordinate ATP.

It belongs to the FGGY kinase family.

The catalysed reaction is glycerol + ATP = sn-glycerol 3-phosphate + ADP + H(+). The protein operates within polyol metabolism; glycerol degradation via glycerol kinase pathway; sn-glycerol 3-phosphate from glycerol: step 1/1. Its activity is regulated as follows. Inhibited by fructose 1,6-bisphosphate (FBP). Functionally, key enzyme in the regulation of glycerol uptake and metabolism. Catalyzes the phosphorylation of glycerol to yield sn-glycerol 3-phosphate. The sequence is that of Glycerol kinase from Coxiella burnetii (strain Dugway 5J108-111).